We begin with the raw amino-acid sequence, 342 residues long: Holliday junction branch migration complex subunit RuvB (342 aa).

The interval 1-181 (MENRMVTPFD…FGMLCAMEFY (181 aa)) is large ATPase domain (RuvB-L). Residues Leu-20, Arg-21, Gly-62, Lys-65, Thr-66, Thr-67, 128 to 130 (EDY), Arg-171, Tyr-181, and Arg-218 contribute to the ATP site. Position 66 (Thr-66) interacts with Mg(2+). Residues 182-252 (TDEELMEIVV…GAKAALDLLE (71 aa)) form a small ATPAse domain (RuvB-S) region. The interval 255–342 (KEGLDKIDNK…KDNQVSIFNK (88 aa)) is head domain (RuvB-H). DNA-binding residues include Arg-310 and Arg-315.

The protein belongs to the RuvB family. In terms of assembly, homohexamer. Forms an RuvA(8)-RuvB(12)-Holliday junction (HJ) complex. HJ DNA is sandwiched between 2 RuvA tetramers; dsDNA enters through RuvA and exits via RuvB. An RuvB hexamer assembles on each DNA strand where it exits the tetramer. Each RuvB hexamer is contacted by two RuvA subunits (via domain III) on 2 adjacent RuvB subunits; this complex drives branch migration. In the full resolvosome a probable DNA-RuvA(4)-RuvB(12)-RuvC(2) complex forms which resolves the HJ.

The protein resides in the cytoplasm. The catalysed reaction is ATP + H2O = ADP + phosphate + H(+). Its function is as follows. The RuvA-RuvB-RuvC complex processes Holliday junction (HJ) DNA during genetic recombination and DNA repair, while the RuvA-RuvB complex plays an important role in the rescue of blocked DNA replication forks via replication fork reversal (RFR). RuvA specifically binds to HJ cruciform DNA, conferring on it an open structure. The RuvB hexamer acts as an ATP-dependent pump, pulling dsDNA into and through the RuvAB complex. RuvB forms 2 homohexamers on either side of HJ DNA bound by 1 or 2 RuvA tetramers; 4 subunits per hexamer contact DNA at a time. Coordinated motions by a converter formed by DNA-disengaged RuvB subunits stimulates ATP hydrolysis and nucleotide exchange. Immobilization of the converter enables RuvB to convert the ATP-contained energy into a lever motion, pulling 2 nucleotides of DNA out of the RuvA tetramer per ATP hydrolyzed, thus driving DNA branch migration. The RuvB motors rotate together with the DNA substrate, which together with the progressing nucleotide cycle form the mechanistic basis for DNA recombination by continuous HJ branch migration. Branch migration allows RuvC to scan DNA until it finds its consensus sequence, where it cleaves and resolves cruciform DNA. The chain is Holliday junction branch migration complex subunit RuvB from Clostridium botulinum (strain Loch Maree / Type A3).